Here is a 445-residue protein sequence, read N- to C-terminus: Phosphoglucosamine mutase (445 aa).

Catalysis depends on S102, which acts as the Phosphoserine intermediate. S102, D241, D243, and D245 together coordinate Mg(2+). The residue at position 102 (S102) is a Phosphoserine.

The protein belongs to the phosphohexose mutase family. Mg(2+) is required as a cofactor. Post-translationally, activated by phosphorylation.

The catalysed reaction is alpha-D-glucosamine 1-phosphate = D-glucosamine 6-phosphate. Its function is as follows. Catalyzes the conversion of glucosamine-6-phosphate to glucosamine-1-phosphate. This chain is Phosphoglucosamine mutase, found in Photorhabdus laumondii subsp. laumondii (strain DSM 15139 / CIP 105565 / TT01) (Photorhabdus luminescens subsp. laumondii).